A 315-amino-acid polypeptide reads, in one-letter code: Lipoyl synthase (315 aa).

[4Fe-4S] cluster is bound by residues Cys62, Cys67, Cys73, Cys88, Cys92, Cys95, and Ser302. The Radical SAM core domain maps to 73–291; the sequence is CFGHGTATFM…GELAKKLGFS (219 aa).

It belongs to the radical SAM superfamily. Lipoyl synthase family. [4Fe-4S] cluster is required as a cofactor.

The protein resides in the cytoplasm. It carries out the reaction [[Fe-S] cluster scaffold protein carrying a second [4Fe-4S](2+) cluster] + N(6)-octanoyl-L-lysyl-[protein] + 2 oxidized [2Fe-2S]-[ferredoxin] + 2 S-adenosyl-L-methionine + 4 H(+) = [[Fe-S] cluster scaffold protein] + N(6)-[(R)-dihydrolipoyl]-L-lysyl-[protein] + 4 Fe(3+) + 2 hydrogen sulfide + 2 5'-deoxyadenosine + 2 L-methionine + 2 reduced [2Fe-2S]-[ferredoxin]. Its pathway is protein modification; protein lipoylation via endogenous pathway; protein N(6)-(lipoyl)lysine from octanoyl-[acyl-carrier-protein]: step 2/2. Its function is as follows. Catalyzes the radical-mediated insertion of two sulfur atoms into the C-6 and C-8 positions of the octanoyl moiety bound to the lipoyl domains of lipoate-dependent enzymes, thereby converting the octanoylated domains into lipoylated derivatives. The chain is Lipoyl synthase from Coxiella burnetii (strain CbuG_Q212) (Coxiella burnetii (strain Q212)).